Here is a 507-residue protein sequence, read N- to C-terminus: ATP synthase subunit alpha (507 aa).

168-175 is an ATP binding site; it reads GDRQTGKT.

The protein belongs to the ATPase alpha/beta chains family. As to quaternary structure, F-type ATPases have 2 components, CF(1) - the catalytic core - and CF(0) - the membrane proton channel. CF(1) has five subunits: alpha(3), beta(3), gamma(1), delta(1), epsilon(1). CF(0) has three main subunits: a(1), b(2) and c(9-12). The alpha and beta chains form an alternating ring which encloses part of the gamma chain. CF(1) is attached to CF(0) by a central stalk formed by the gamma and epsilon chains, while a peripheral stalk is formed by the delta and b chains.

Its subcellular location is the cell membrane. It catalyses the reaction ATP + H2O + 4 H(+)(in) = ADP + phosphate + 5 H(+)(out). Functionally, produces ATP from ADP in the presence of a proton gradient across the membrane. The alpha chain is a regulatory subunit. The protein is ATP synthase subunit alpha of Mesomycoplasma hyopneumoniae (strain 232) (Mycoplasma hyopneumoniae).